We begin with the raw amino-acid sequence, 376 residues long: Chaperone protein DnaJ (376 aa).

Positions 5 to 70 (DYYEILGVSK…QKRAAYDQYG (66 aa)) constitute a J domain. The segment at 131–209 (GVTKEIRIPT…CHGHGRVERS (79 aa)) adopts a CR-type zinc-finger fold. 8 residues coordinate Zn(2+): Cys144, Cys147, Cys161, Cys164, Cys183, Cys186, Cys197, and Cys200. 4 CXXCXGXG motif repeats span residues 144–151 (CDVCHGSG), 161–168 (CPTCHGSG), 183–190 (CPHCQGRG), and 197–204 (CNKCHGHG).

This sequence belongs to the DnaJ family. Homodimer. Zn(2+) serves as cofactor.

Its subcellular location is the cytoplasm. Participates actively in the response to hyperosmotic and heat shock by preventing the aggregation of stress-denatured proteins and by disaggregating proteins, also in an autonomous, DnaK-independent fashion. Unfolded proteins bind initially to DnaJ; upon interaction with the DnaJ-bound protein, DnaK hydrolyzes its bound ATP, resulting in the formation of a stable complex. GrpE releases ADP from DnaK; ATP binding to DnaK triggers the release of the substrate protein, thus completing the reaction cycle. Several rounds of ATP-dependent interactions between DnaJ, DnaK and GrpE are required for fully efficient folding. Also involved, together with DnaK and GrpE, in the DNA replication of plasmids through activation of initiation proteins. The protein is Chaperone protein DnaJ of Escherichia fergusonii (strain ATCC 35469 / DSM 13698 / CCUG 18766 / IAM 14443 / JCM 21226 / LMG 7866 / NBRC 102419 / NCTC 12128 / CDC 0568-73).